We begin with the raw amino-acid sequence, 143 residues long: Nucleoside diphosphate kinase (143 aa).

ATP contacts are provided by Lys11, Phe59, Arg87, Thr93, Arg104, and Asn114. Catalysis depends on His117, which acts as the Pros-phosphohistidine intermediate.

The protein belongs to the NDK family. Homotetramer. The cofactor is Mg(2+).

It is found in the cytoplasm. The enzyme catalyses a 2'-deoxyribonucleoside 5'-diphosphate + ATP = a 2'-deoxyribonucleoside 5'-triphosphate + ADP. It carries out the reaction a ribonucleoside 5'-diphosphate + ATP = a ribonucleoside 5'-triphosphate + ADP. Its function is as follows. Major role in the synthesis of nucleoside triphosphates other than ATP. The ATP gamma phosphate is transferred to the NDP beta phosphate via a ping-pong mechanism, using a phosphorylated active-site intermediate. The chain is Nucleoside diphosphate kinase from Shewanella amazonensis (strain ATCC BAA-1098 / SB2B).